The primary structure comprises 105 residues: Met repressor (105 aa).

This sequence belongs to the MetJ family. Homodimer.

The protein localises to the cytoplasm. This regulatory protein, when combined with SAM (S-adenosylmethionine) represses the expression of the methionine regulon and of enzymes involved in SAM synthesis. This chain is Met repressor, found in Haemophilus influenzae (strain PittEE).